Reading from the N-terminus, the 62-residue chain is KHNFLNHGLSLNLVIKPYLALEGSVAFPAENGVQDTESTQEKRETGDEENSAKFPIGRRDFD.

The tract at residues 23–41 (GSVAFPAENGVQDTESTQE) is NGE-like. Positions 29-62 (AENGVQDTESTQEKRETGDEENSAKFPIGRRDFD) are disordered. The interval 44 to 56 (ETGDEENSAKFPI) is NEI-like. Residues 60-62 (DFD) form a melanin-concentrating hormone-like region.

The protein belongs to the melanin-concentrating hormone family.

This is Pro-MCH variant (PMCHL1) from Pan paniscus (Pygmy chimpanzee).